Here is a 396-residue protein sequence, read N- to C-terminus: S-adenosylmethionine synthase (396 aa).

H14 provides a ligand contact to ATP. Residue D16 participates in Mg(2+) binding. E42 is a binding site for K(+). L-methionine is bound by residues E55 and Q98. Residues 98–108 (QSPDIALGVNK) are flexible loop. ATP-binding positions include 174 to 176 (DGK), 241 to 242 (RF), D250, 256 to 257 (RK), A273, and K277. D250 contacts L-methionine. K281 provides a ligand contact to L-methionine.

The protein belongs to the AdoMet synthase family. As to quaternary structure, homotetramer; dimer of dimers. Mg(2+) is required as a cofactor. It depends on K(+) as a cofactor.

It is found in the cytoplasm. The enzyme catalyses L-methionine + ATP + H2O = S-adenosyl-L-methionine + phosphate + diphosphate. Its pathway is amino-acid biosynthesis; S-adenosyl-L-methionine biosynthesis; S-adenosyl-L-methionine from L-methionine: step 1/1. Its function is as follows. Catalyzes the formation of S-adenosylmethionine (AdoMet) from methionine and ATP. The overall synthetic reaction is composed of two sequential steps, AdoMet formation and the subsequent tripolyphosphate hydrolysis which occurs prior to release of AdoMet from the enzyme. This Pseudothermotoga lettingae (strain ATCC BAA-301 / DSM 14385 / NBRC 107922 / TMO) (Thermotoga lettingae) protein is S-adenosylmethionine synthase.